A 107-amino-acid polypeptide reads, in one-letter code: MVSGVSRNAARTSSGCIVALVSTDDDYTSQDVTTIPQAIRFPSSCLVTYSCVSCYLAIPSGKLHAASSFEHVLECTVAPVSEYVKSVFVGSSIECTGRSGSVTFALV.

The propeptide occupies 1 to 8; the sequence is MVSGVSRN. Cysteine 45, cysteine 51, and cysteine 54 together coordinate [2Fe-2S] cluster.

[2Fe-2S] cluster serves as cofactor.

It is found in the hydrogenosome. In terms of biological role, ferredoxins are iron-sulfur proteins that transfer electrons in a wide variety of metabolic reactions. The chain is Ferredoxin from Psalteriomonas lanterna (Amoeboflagellate).